A 340-amino-acid polypeptide reads, in one-letter code: MNENLDPTNQKYNPEELDLEKKLRPLSFDDFTGQEQVLENLKIFVQAANLRGEALDHTLFHGPPGLGKTTLANILANELGVGIKITSGPVLDKPGDLAGLLTNLDERDVLFIDEIHRLSPIVEEYLYSAMEDFKIDIMIESGPNARSVQINLSPFTLVGATTRSGLLTAPMRARFGIQSRLQYYNAELLTTIVQRSSSILKMPITMEAAIEIAGRSRGTPRIANAMLRRVRDFAQIKGNGSIDIEIAKFALNALHVDAHGLDEMDNKILNTIIDKFKGGPVGLSTLATAVSESSETIEEVYEPFLIQEGFIMRTPRGREVTEKAYKHLGKVKANVQGGLF.

The segment at 1-184 (MNENLDPTNQ…FGIQSRLQYY (184 aa)) is large ATPase domain (RuvB-L). ATP-binding positions include Leu-23, Arg-24, Gly-65, Lys-68, Thr-69, Thr-70, 131–133 (EDF), Arg-174, Tyr-184, and Arg-221. Mg(2+) is bound at residue Thr-69. The interval 185-255 (NAELLTTIVQ…IAKFALNALH (71 aa)) is small ATPAse domain (RuvB-S). Residues 258–340 (AHGLDEMDNK…VKANVQGGLF (83 aa)) are head domain (RuvB-H). DNA is bound by residues Arg-313 and Arg-318.

This sequence belongs to the RuvB family. As to quaternary structure, homohexamer. Forms an RuvA(8)-RuvB(12)-Holliday junction (HJ) complex. HJ DNA is sandwiched between 2 RuvA tetramers; dsDNA enters through RuvA and exits via RuvB. An RuvB hexamer assembles on each DNA strand where it exits the tetramer. Each RuvB hexamer is contacted by two RuvA subunits (via domain III) on 2 adjacent RuvB subunits; this complex drives branch migration. In the full resolvosome a probable DNA-RuvA(4)-RuvB(12)-RuvC(2) complex forms which resolves the HJ.

It is found in the cytoplasm. It catalyses the reaction ATP + H2O = ADP + phosphate + H(+). Functionally, the RuvA-RuvB-RuvC complex processes Holliday junction (HJ) DNA during genetic recombination and DNA repair, while the RuvA-RuvB complex plays an important role in the rescue of blocked DNA replication forks via replication fork reversal (RFR). RuvA specifically binds to HJ cruciform DNA, conferring on it an open structure. The RuvB hexamer acts as an ATP-dependent pump, pulling dsDNA into and through the RuvAB complex. RuvB forms 2 homohexamers on either side of HJ DNA bound by 1 or 2 RuvA tetramers; 4 subunits per hexamer contact DNA at a time. Coordinated motions by a converter formed by DNA-disengaged RuvB subunits stimulates ATP hydrolysis and nucleotide exchange. Immobilization of the converter enables RuvB to convert the ATP-contained energy into a lever motion, pulling 2 nucleotides of DNA out of the RuvA tetramer per ATP hydrolyzed, thus driving DNA branch migration. The RuvB motors rotate together with the DNA substrate, which together with the progressing nucleotide cycle form the mechanistic basis for DNA recombination by continuous HJ branch migration. Branch migration allows RuvC to scan DNA until it finds its consensus sequence, where it cleaves and resolves cruciform DNA. The polypeptide is Holliday junction branch migration complex subunit RuvB (Flavobacterium psychrophilum (strain ATCC 49511 / DSM 21280 / CIP 103535 / JIP02/86)).